The primary structure comprises 230 residues: Geranylgeranylglyceryl phosphate synthase (230 aa).

Lys-13 contacts sn-glycerol 1-phosphate. Residues Asp-15 and Thr-41 each coordinate Mg(2+). Residues 161–166 (YIEYSG), Gly-191, and 211–212 (GN) each bind sn-glycerol 1-phosphate.

Belongs to the GGGP/HepGP synthase family. Group I subfamily. Mg(2+) serves as cofactor.

The protein localises to the cytoplasm. The catalysed reaction is sn-glycerol 1-phosphate + (2E,6E,10E)-geranylgeranyl diphosphate = sn-3-O-(geranylgeranyl)glycerol 1-phosphate + diphosphate. It functions in the pathway membrane lipid metabolism; glycerophospholipid metabolism. Its function is as follows. Prenyltransferase that catalyzes the transfer of the geranylgeranyl moiety of geranylgeranyl diphosphate (GGPP) to the C3 hydroxyl of sn-glycerol-1-phosphate (G1P). This reaction is the first ether-bond-formation step in the biosynthesis of archaeal membrane lipids. The protein is Geranylgeranylglyceryl phosphate synthase of Methanoculleus marisnigri (strain ATCC 35101 / DSM 1498 / JR1).